Reading from the N-terminus, the 422-residue chain is Interleukin-11 receptor subunit alpha (422 aa).

The N-terminal stretch at 1-22 (MSSSCSGLSRVLVAVATALVSA) is a signal peptide. Residues 24–370 (SPCPQAWGPP…DSVEQVAVLV (347 aa)) are Extracellular-facing. The 84-residue stretch at 27–110 (PQAWGPPGVQ…LGGTVTLQLG (84 aa)) folds into the Ig-like C2-type domain. 3 cysteine pairs are disulfide-bonded: C48/C94, C120/C130, and C170/C180. 2 Fibronectin type-III domains span residues 112–219 (PPAR…LRPD) and 220–317 (PPQG…TPST). N127 carries N-linked (GlcNAc...) asparagine glycosylation. N194 carries an N-linked (GlcNAc...) asparagine glycan. The WSXWS motif signature appears at 304-308 (WSTWS). Residues 335 to 355 (EVEPQVDSPAPPRPSLQPHPR) are disordered. The helical transmembrane segment at 371–391 (SLGILSFLGLVAGALALGLWL) threads the bilayer. Over 392 to 422 (RLRRGGKDGSPKPGFLASVIPVDRHPGAPNL) the chain is Cytoplasmic.

The protein belongs to the type I cytokine receptor family. Type 3 subfamily. In terms of assembly, on IL11 binding, forms a multimer complex with IL6ST/gp130. Post-translationally, a short soluble form is also released from the membrane by proteolysis. The sIL11RA is formed either by limited proteolysis of membrane-bound receptors, a process referred to as ectodomain shedding, or directly secreted from the cells after alternative mRNA splicing. mIL11RA is cleaved by the proteases ADAM10, ELANE and PRTN3.

The protein resides in the membrane. It is found in the secreted. In terms of biological role, receptor for interleukin-11 (IL11). The receptor systems for IL6, LIF, OSM, CNTF, IL11 and CT1 can utilize IL6ST for initiating signal transmission. The IL11/IL11RA/IL6ST complex may be involved in the control of proliferation and/or differentiation of skeletogenic progenitor or other mesenchymal cells. Essential for the normal development of craniofacial bones and teeth. Restricts suture fusion and tooth number. Functionally, soluble form of IL11 receptor (sIL11RA) that acts as an agonist of IL11 activity. The IL11:sIL11RA complex binds to IL6ST/gp130 on cell surfaces and induces signaling also on cells that do not express membrane-bound IL11RA in a process called IL11 trans-signaling. The protein is Interleukin-11 receptor subunit alpha (IL11RA) of Pongo abelii (Sumatran orangutan).